We begin with the raw amino-acid sequence, 492 residues long: N-succinylglutamate 5-semialdehyde dehydrogenase (492 aa).

Position 220-225 (220-225 (GSSTTG)) interacts with NAD(+). Catalysis depends on residues Glu243 and Cys277.

The protein belongs to the aldehyde dehydrogenase family. AstD subfamily.

It carries out the reaction N-succinyl-L-glutamate 5-semialdehyde + NAD(+) + H2O = N-succinyl-L-glutamate + NADH + 2 H(+). It functions in the pathway amino-acid degradation; L-arginine degradation via AST pathway; L-glutamate and succinate from L-arginine: step 4/5. Functionally, catalyzes the NAD-dependent reduction of succinylglutamate semialdehyde into succinylglutamate. The polypeptide is N-succinylglutamate 5-semialdehyde dehydrogenase (Klebsiella pneumoniae subsp. pneumoniae (strain ATCC 700721 / MGH 78578)).